A 226-amino-acid polypeptide reads, in one-letter code: MNTWLLSLQNSNSPTYDMMIFFHDFTMMILIFITLLILFIMFTMINNNLINRFLLQGHFIELIWTITPMIILILIAIPSFKILYLTDEMFNNKITIKSVGHQWYWSYEYSDFLNIEFDSFMIPSNQLNPNEFRLLDTDNRCILPFNYPIRILTTSMDVIHSWTVPSLGIKMDSTPGRLNQSLLYMYRPGLYFGQCSEICGTNHSFMPIVIESTNFSYFKNWLKSFL.

Over M1–F25 the chain is Mitochondrial intermembrane. The chain crosses the membrane as a helical span at residues T26 to N47. The Mitochondrial matrix portion of the chain corresponds to N48–E61. The helical transmembrane segment at L62–K81 threads the bilayer. The Mitochondrial intermembrane portion of the chain corresponds to I82–L226. Cu cation-binding residues include H160, C195, E197, C199, H203, and M206. Residue E197 coordinates Mg(2+).

The protein belongs to the cytochrome c oxidase subunit 2 family. Component of the cytochrome c oxidase (complex IV, CIV), a multisubunit enzyme composed of a catalytic core of 3 subunits and several supernumerary subunits. The complex exists as a monomer or a dimer and forms supercomplexes (SCs) in the inner mitochondrial membrane with ubiquinol-cytochrome c oxidoreductase (cytochrome b-c1 complex, complex III, CIII). It depends on Cu cation as a cofactor.

It is found in the mitochondrion inner membrane. It catalyses the reaction 4 Fe(II)-[cytochrome c] + O2 + 8 H(+)(in) = 4 Fe(III)-[cytochrome c] + 2 H2O + 4 H(+)(out). Its function is as follows. Component of the cytochrome c oxidase, the last enzyme in the mitochondrial electron transport chain which drives oxidative phosphorylation. The respiratory chain contains 3 multisubunit complexes succinate dehydrogenase (complex II, CII), ubiquinol-cytochrome c oxidoreductase (cytochrome b-c1 complex, complex III, CIII) and cytochrome c oxidase (complex IV, CIV), that cooperate to transfer electrons derived from NADH and succinate to molecular oxygen, creating an electrochemical gradient over the inner membrane that drives transmembrane transport and the ATP synthase. Cytochrome c oxidase is the component of the respiratory chain that catalyzes the reduction of oxygen to water. Electrons originating from reduced cytochrome c in the intermembrane space (IMS) are transferred via the dinuclear copper A center (CU(A)) of subunit 2 and heme A of subunit 1 to the active site in subunit 1, a binuclear center (BNC) formed by heme A3 and copper B (CU(B)). The BNC reduces molecular oxygen to 2 water molecules using 4 electrons from cytochrome c in the IMS and 4 protons from the mitochondrial matrix. This chain is Cytochrome c oxidase subunit 2 (COII), found in Lasius sp.